The chain runs to 166 residues: Crossover junction endodeoxyribonuclease RuvC (166 aa).

Catalysis depends on residues Asp-12, Glu-71, and Asp-143. Mg(2+) is bound by residues Asp-12, Glu-71, and Asp-143.

Belongs to the RuvC family. As to quaternary structure, homodimer which binds Holliday junction (HJ) DNA. The HJ becomes 2-fold symmetrical on binding to RuvC with unstacked arms; it has a different conformation from HJ DNA in complex with RuvA. In the full resolvosome a probable DNA-RuvA(4)-RuvB(12)-RuvC(2) complex forms which resolves the HJ. It depends on Mg(2+) as a cofactor.

The protein resides in the cytoplasm. The enzyme catalyses Endonucleolytic cleavage at a junction such as a reciprocal single-stranded crossover between two homologous DNA duplexes (Holliday junction).. In terms of biological role, the RuvA-RuvB-RuvC complex processes Holliday junction (HJ) DNA during genetic recombination and DNA repair. Endonuclease that resolves HJ intermediates. Cleaves cruciform DNA by making single-stranded nicks across the HJ at symmetrical positions within the homologous arms, yielding a 5'-phosphate and a 3'-hydroxyl group; requires a central core of homology in the junction. The consensus cleavage sequence is 5'-(A/T)TT(C/G)-3'. Cleavage occurs on the 3'-side of the TT dinucleotide at the point of strand exchange. HJ branch migration catalyzed by RuvA-RuvB allows RuvC to scan DNA until it finds its consensus sequence, where it cleaves and resolves the cruciform DNA. In Oleidesulfovibrio alaskensis (strain ATCC BAA-1058 / DSM 17464 / G20) (Desulfovibrio alaskensis), this protein is Crossover junction endodeoxyribonuclease RuvC.